We begin with the raw amino-acid sequence, 532 residues long: 2,3-bisphosphoglycerate-independent phosphoglycerate mutase (532 aa).

Mn(2+) contacts are provided by Asp15 and Ser65. The Phosphoserine intermediate role is filled by Ser65. Residues His126, 156-157 (RD), Arg188, Arg194, 258-261 (RPDR), and Lys331 contribute to the substrate site. Residues Asp398, His402, Asp439, His440, and His457 each contribute to the Mn(2+) site.

This sequence belongs to the BPG-independent phosphoglycerate mutase family. Monomer. Mn(2+) serves as cofactor.

It catalyses the reaction (2R)-2-phosphoglycerate = (2R)-3-phosphoglycerate. Its pathway is carbohydrate degradation; glycolysis; pyruvate from D-glyceraldehyde 3-phosphate: step 3/5. Functionally, catalyzes the interconversion of 2-phosphoglycerate and 3-phosphoglycerate. This Rippkaea orientalis (strain PCC 8801 / RF-1) (Cyanothece sp. (strain PCC 8801)) protein is 2,3-bisphosphoglycerate-independent phosphoglycerate mutase.